A 364-amino-acid chain; its full sequence is Long-wave-sensitive opsin 1 (364 aa).

Residues Met-1–Val-52 are Extracellular-facing. The O-linked (GlcNAc) serine glycan is linked to Ser-22. The N-linked (GlcNAc...) asparagine glycan is linked to Asn-34. A helical membrane pass occupies residues Tyr-53–Ala-77. Residues Thr-78–Asn-89 are Cytoplasmic-facing. Residues Trp-90–Ile-115 traverse the membrane as a helical segment. Residues Tyr-116–Glu-129 lie on the Extracellular side of the membrane. A disulfide bridge connects residues Cys-126 and Cys-203. Residues Gly-130 to Trp-149 form a helical membrane-spanning segment. Residues Glu-150–Leu-168 are Cytoplasmic-facing. The chain crosses the membrane as a helical span at residues Ala-169–Ser-192. The Extracellular segment spans residues Arg-193 to Ser-218. A helical transmembrane segment spans residues Tyr-219 to Ile-246. The Cytoplasmic portion of the chain corresponds to Arg-247–Arg-268. Residues Met-269 to Ala-292 traverse the membrane as a helical segment. The Extracellular portion of the chain corresponds to Ala-293–His-300. The chain crosses the membrane as a helical span at residues Pro-301–Met-325. Residue Lys-312 is modified to N6-(retinylidene)lysine. Residues Asn-326–Ala-364 are Cytoplasmic-facing.

The protein belongs to the G-protein coupled receptor 1 family. Opsin subfamily. Phosphorylated on some or all of the serine and threonine residues present in the C-terminal region. As to expression, the three color pigments are found in the cone photoreceptor cells. Expressed in retina.

The protein resides in the membrane. Functionally, visual pigments are the light-absorbing molecules that mediate vision. They consist of an apoprotein, opsin, covalently linked to cis-retinal. The sequence is that of Long-wave-sensitive opsin 1 (OPN1LW) from Equus caballus (Horse).